Here is a 484-residue protein sequence, read N- to C-terminus: MASLLWGGDAGAAESERLNSHFSNLVHPRKNLRGIRSTTVPNIDGSLNTEDDDDDEDDVVDLAANSLLNKLIRQSLIESSHRVEVLQKDPSSPLYSVKTFEELRLKEELLKGIYAMGFNRPSKIQEMALPMMLAHPPQNLIAQSQSGTGKTAAFVLAMLSRVNALELFPQCLCLAPTYELALQTGRVVERMGKFCVDVEVMYAIRGNRIPRGTEVTKQIIIGTPGTVLDWCFKRKLIDLTKIRVFVLDEADVMIDTQGFSDQSIRIQRALPSECQMLLFSATFEDSVWQFAERIIPDPNVIKLRKEELTLNNIRQYYVLCENRKGKYQALCNIYGGITIGQAIIFCQTRRNAKWLTVEMMQDGHQVSLLSGELTVEQRASIIQRFRDGKEKVLITTNVCARGIDVKQVTIVVNFDLPVNQSEEPDYETYLHRIGRTGRFGKKGLAFNMIEVDKLPLLMKIQDHFNSNIKQLDPEDMDEIEKIEY.

At threonine 49 the chain carries Phosphothreonine. The Nuclear export signal signature appears at 62–75 (LAANSLLNKLIRQS). Residues 98 to 126 (KTFEELRLKEELLKGIYAMGFNRPSKIQE) carry the Q motif motif. The short motif at 101–115 (EELRLKEELLKGIYA) is the Nuclear localization signal element. A Helicase ATP-binding domain is found at 131 to 301 (MMLAHPPQNL…ERIIPDPNVI (171 aa)). ATP is bound at residue 144-151 (SQSGTGKT). The short motif at 248–251 (DEAD) is the DEAD box element. Residues 312-479 (NIRQYYVLCE…QLDPEDMDEI (168 aa)) enclose the Helicase C-terminal domain.

It belongs to the DEAD box helicase family. Post-translationally, phosphorylated on threonine residues. The phosphorylated form is found in the cytoplasm but not in the nucleus. Isoform 1 is expressed in germ cells. Isoform 2 is expressed in Leydig cells and in round spermatids of adult testis upon gonadotropin stimulation.

The protein resides in the cytoplasm. Its subcellular location is the nucleus. It catalyses the reaction ATP + H2O = ADP + phosphate + H(+). In terms of biological role, ATP-dependent RNA helicase. Required for mRNA export and translation regulation during spermatid development. This Mus musculus (Mouse) protein is ATP-dependent RNA helicase DDX25 (Ddx25).